The chain runs to 215 residues: Ectodysplasin-A receptor-associated adapter protein (215 aa).

2 disordered regions span residues 1 to 41 (MGLR…FNMS) and 62 to 86 (LNCP…TGDP). Positions 17-28 (GHQEDHMVKEPV) are enriched in basic and acidic residues. The 80-residue stretch at 123 to 202 (DVIRIKLDPC…KVLRRWVDEE (80 aa)) folds into the Death domain.

In terms of assembly, self-associates and binds EDAR, TRAF1, TRAF2 and TRAF3. In terms of tissue distribution, detected in adult pancreas, placenta and fetal skin, and at lower levels in lung, thymus, prostate and testis.

It is found in the cytoplasm. Its function is as follows. Adapter protein that interacts with EDAR DEATH domain and couples the receptor to EDA signaling pathway during morphogenesis of ectodermal organs. Mediates the activation of NF-kappa-B. The protein is Ectodysplasin-A receptor-associated adapter protein (EDARADD) of Homo sapiens (Human).